Consider the following 547-residue polypeptide: 2-succinyl-5-enolpyruvyl-6-hydroxy-3-cyclohexene-1-carboxylate synthase (547 aa).

The protein belongs to the TPP enzyme family. MenD subfamily. Homodimer. Mg(2+) is required as a cofactor. Requires Mn(2+) as cofactor. Thiamine diphosphate serves as cofactor.

The enzyme catalyses isochorismate + 2-oxoglutarate + H(+) = 5-enolpyruvoyl-6-hydroxy-2-succinyl-cyclohex-3-ene-1-carboxylate + CO2. It functions in the pathway quinol/quinone metabolism; 1,4-dihydroxy-2-naphthoate biosynthesis; 1,4-dihydroxy-2-naphthoate from chorismate: step 2/7. The protein operates within quinol/quinone metabolism; menaquinone biosynthesis. In terms of biological role, catalyzes the thiamine diphosphate-dependent decarboxylation of 2-oxoglutarate and the subsequent addition of the resulting succinic semialdehyde-thiamine pyrophosphate anion to isochorismate to yield 2-succinyl-5-enolpyruvyl-6-hydroxy-3-cyclohexene-1-carboxylate (SEPHCHC). This chain is 2-succinyl-5-enolpyruvyl-6-hydroxy-3-cyclohexene-1-carboxylate synthase, found in Mycobacterium sp. (strain KMS).